The primary structure comprises 289 residues: SNF1-related protein kinase regulatory subunit beta-2 (289 aa).

Positions 1–10 (MGNVNAREEA) are enriched in basic and acidic residues. Positions 1–59 (MGNVNAREEANSNNASAVEDEDAEICSREAMSAASDGNHVAPPELMGQSPPHSPRATQS) are disordered. Glycine 2 is lipidated: N-myristoyl glycine. A kinase-interacting sequence (KIS) region spans residues 103 to 180 (PTMITWCHGG…AGNTFNILDL (78 aa)). An association with SNF1 complex (ASC) region spans residues 217–289 (EPPVVPPHLQ…TVVLYKSLQR (73 aa)).

This sequence belongs to the 5'-AMP-activated protein kinase beta subunit family. Subunit of a probable heterotrimeric complex consisting of an alpha catalytic (KIN10 or KIN11) subunit, and a beta (KINB) and a gamma (KING or SNF4) non-catalytic regulatory subunits. Interacts with SNF4. Interacts with FLZ1, FLZ2, FLZ8, FLZ9, FLZ10, FLZ12, FLZ13 and FLZ14. In terms of processing, sumoylated. In terms of tissue distribution, expressed in leaves, stems, roots, flower buds and flowers. Not detectable in siliques.

The protein resides in the cell membrane. In terms of biological role, regulatory subunit of the probable trimeric SNF1-related protein kinase (SnRK) complex, which may play a role in a signal transduction cascade regulating gene expression and carbohydrate metabolism in higher plants. The SnRK complex may also be involved in the regulation of fatty acid synthesis by phosphorylation of acetyl-CoA carboxylase and in assimilation of nitrogen by phosphorylating nitrate reductase. This chain is SNF1-related protein kinase regulatory subunit beta-2 (KINB2), found in Arabidopsis thaliana (Mouse-ear cress).